Consider the following 434-residue polypeptide: Enolase (434 aa).

Substrate contacts are provided by H158 and E167. The active-site Proton donor is E210. Mg(2+)-binding residues include D245, E294, and D319. E294 and D319 together coordinate substrate. Residue K344 is the Proton acceptor of the active site. Substrate-binding positions include 371–374 and K395; that span reads SHRS.

This sequence belongs to the enolase family. As to quaternary structure, homodimer. Mg(2+) serves as cofactor.

It localises to the cytoplasm. The catalysed reaction is (2R)-2-phosphoglycerate = phosphoenolpyruvate + H2O. The protein operates within carbohydrate degradation; glycolysis; pyruvate from D-glyceraldehyde 3-phosphate: step 4/5. This is Enolase (ENO) from Schistosoma japonicum (Blood fluke).